We begin with the raw amino-acid sequence, 397 residues long: CCA-adding enzyme (397 aa).

G26 and R29 together coordinate ATP. 2 residues coordinate CTP: G26 and R29. 2 residues coordinate Mg(2+): D39 and D41. ATP-binding residues include R110, D153, R156, R159, and R162. CTP-binding residues include R110, D153, R156, R159, and R162.

It belongs to the tRNA nucleotidyltransferase/poly(A) polymerase family. Bacterial CCA-adding enzyme type 3 subfamily. In terms of assembly, homodimer. The cofactor is Mg(2+).

It catalyses the reaction a tRNA precursor + 2 CTP + ATP = a tRNA with a 3' CCA end + 3 diphosphate. It carries out the reaction a tRNA with a 3' CCA end + 2 CTP + ATP = a tRNA with a 3' CCACCA end + 3 diphosphate. Functionally, catalyzes the addition and repair of the essential 3'-terminal CCA sequence in tRNAs without using a nucleic acid template. Adds these three nucleotides in the order of C, C, and A to the tRNA nucleotide-73, using CTP and ATP as substrates and producing inorganic pyrophosphate. tRNA 3'-terminal CCA addition is required both for tRNA processing and repair. Also involved in tRNA surveillance by mediating tandem CCA addition to generate a CCACCA at the 3' terminus of unstable tRNAs. While stable tRNAs receive only 3'-terminal CCA, unstable tRNAs are marked with CCACCA and rapidly degraded. In Bacillus cereus (strain ZK / E33L), this protein is CCA-adding enzyme.